The sequence spans 546 residues: MRLTVWTYEGPPQVGAMRVATAMRGVHYVVHAPQGDSYADLLFTMIERRPGRPAVSYTSFQARDLGTDTAALFKTAAADAVARFQPEALLVGSSCTGELIQDDPGGLAKALGLSIPVIPLELPSYQRKENWGAAETFYRLVRTMAGPAAPAPGTPRAPRPAGQRPRCNLLGPTALGFRHRDDVQAVVALLGRMGVDVAVVAPLGASPADLARLGEADFNVVLYPEIADTAVRWLERAFGQPSVRTVPIGVGATRAFIAEVAAVAGVDPAPALAEESLRLPWWSRSVDSTYLTGKRVFIFGDATHAVAAARVATEEFGFEVVGLGTYAREYARELRACAGALGLEALITDDYLDVEAAIADAHPDLVLGTQMERHIAKRLGVPCAVISAPVHVQDFPARTAPQMGFDGANVLFDTWVHPLMMGLEEHLLMMFRDDFEFHGDAAPSHLSAHRPTGEAVGDAVGEPPAAPRDQAAPAATLDGSAAQSDPARTTPPGAPSWEDSAEKELRKVPFFVRGKARRNTERFAAERGLASISVETLYDAKAHFGR.

Aspartate 36 serves as a coordination point for [4Fe-4S] cluster. Residue aspartate 287 is the Proton donor of the active site. Residue 422-423 (GL) coordinates substrate. The interval 443 to 501 (PSHLSAHRPTGEAVGDAVGEPPAAPRDQAAPAATLDGSAAQSDPARTTPPGAPSWEDSA) is disordered.

It belongs to the ChlB/BchB/BchZ family. Protochlorophyllide reductase is composed of three subunits; BchL, BchN and BchB. Forms a heterotetramer of two BchB and two BchN subunits. Requires [4Fe-4S] cluster as cofactor.

It carries out the reaction chlorophyllide a + oxidized 2[4Fe-4S]-[ferredoxin] + 2 ADP + 2 phosphate = protochlorophyllide a + reduced 2[4Fe-4S]-[ferredoxin] + 2 ATP + 2 H2O. Its pathway is porphyrin-containing compound metabolism; bacteriochlorophyll biosynthesis (light-independent). Its function is as follows. Component of the dark-operative protochlorophyllide reductase (DPOR) that uses Mg-ATP and reduced ferredoxin to reduce ring D of protochlorophyllide (Pchlide) to form chlorophyllide a (Chlide). This reaction is light-independent. The NB-protein (BchN-BchB) is the catalytic component of the complex. The chain is Light-independent protochlorophyllide reductase subunit B from Rhodospirillum rubrum (strain ATCC 11170 / ATH 1.1.1 / DSM 467 / LMG 4362 / NCIMB 8255 / S1).